The following is a 540-amino-acid chain: T-complex protein 1 subunit alpha (540 aa).

The protein belongs to the TCP-1 chaperonin family. Component of the T-complex protein 1 (TCP1) complex.

The protein localises to the cytoplasm. Molecular chaperone; assists the folding of proteins upon ATP hydrolysis. The protein is T-complex protein 1 subunit alpha (TCP1) of Encephalitozoon cuniculi (strain GB-M1) (Microsporidian parasite).